Consider the following 293-residue polypeptide: MATISAKLVKELREKTGAGMMDCKKALTETDGDIDKAIDYLREKGIAKAAKKADRIAAEGLVHVETKGNDAVIVEINSETDFVARNAGFQELVKEIANQVLDTKAETVEALMETTLPNGKSVDERIKEAISTIGEKLSVRRFAIRTKTDNDAFGAYLHMGGRIGVLTVVEGSTDEEAARDVAMHIAAINPKYVSSEQVSEEEINHEREVLKQQALNEGKPENIVEKMVEGRLRKYLQEICAVDQDFVKNPDVTVEAFLKTKGGKLVDFVRYEVGEGMEKREENFADEVKGQMK.

The segment at T80–V83 is involved in Mg(2+) ion dislocation from EF-Tu.

The protein belongs to the EF-Ts family.

It is found in the cytoplasm. In terms of biological role, associates with the EF-Tu.GDP complex and induces the exchange of GDP to GTP. It remains bound to the aminoacyl-tRNA.EF-Tu.GTP complex up to the GTP hydrolysis stage on the ribosome. This Staphylococcus aureus (strain Newman) protein is Elongation factor Ts.